The chain runs to 102 residues: uncharacterized protein (102 aa).

A helical membrane pass occupies residues Ile5 to Phe27.

It localises to the host membrane. This is an uncharacterized protein from Microplitis demolitor (Parasitoid wasp).